A 61-amino-acid chain; its full sequence is Protein DDR2 (61 aa).

An N-terminal signal peptide occupies residues 1-22 (MKVSQVFISAISVFGLATSVNA). Asn24 and Asn27 each carry an N-linked (GlcNAc...) asparagine glycan.

It to yeast HOR7.

Functionally, may play an important role in the response of cells to diverse environmental stresses. The protein is Protein DDR2 (DDR2) of Saccharomyces cerevisiae (strain ATCC 204508 / S288c) (Baker's yeast).